Consider the following 338-residue polypeptide: UPF0194 membrane protein in asrC 5'region (338 aa).

The first 23 residues, 1–23 (MAISPKKRALALVVVLIVAGAVA), serve as a signal peptide directing secretion. Residues 148 to 207 (KQSLDNAAAALKTARANLDRAQQALTLAIKGPRKEDIAAARQQLQADKAGLSLARRELTD) are a coiled coil.

The protein belongs to the UPF0194 family.

It is found in the periplasm. This is UPF0194 membrane protein in asrC 5'region from Acidithiobacillus ferridurans.